The primary structure comprises 718 residues: Phospholipid phosphatase-related protein type 3 (718 aa).

The next 3 membrane-spanning stretches (helical) occupy residues leucine 18–phenylalanine 38, leucine 70–valine 90, and phenylalanine 133–leucine 153. The N-linked (GlcNAc...) asparagine glycan is linked to asparagine 169. 3 helical membrane-spanning segments follow: residues histidine 207–serine 227, leucine 233–isoleucine 253, and valine 263–glycine 283. A disordered region spans residues serine 313–glycine 347. A compositionally biased stretch (polar residues) spans valine 314–threonine 323. An N-linked (GlcNAc...) asparagine glycan is attached at asparagine 318. 2 positions are modified to phosphoserine: serine 322 and serine 353. Residue threonine 376 is modified to Phosphothreonine. The tract at residues leucine 416–alanine 488 is disordered. Serine 428 carries the post-translational modification Phosphoserine. Residues methionine 439–glycine 462 are compositionally biased toward acidic residues. Residue serine 508 is modified to Phosphoserine. Positions alanine 545–serine 571 are enriched in low complexity. The segment at alanine 545 to serine 577 is disordered. A Phosphoserine modification is found at serine 641. Over residues glycine 664–glycine 680 the composition is skewed to low complexity. Positions glycine 664 to alanine 702 are disordered.

It belongs to the PA-phosphatase related phosphoesterase family.

The protein localises to the membrane. This is Phospholipid phosphatase-related protein type 3 from Homo sapiens (Human).